The sequence spans 479 residues: UDP-glycosyltransferase 85A5 (479 aa).

UDP-alpha-D-glucose is bound by residues S301, 358–360, 375–383, and 397–400; these read CPQ, HSGWNSTLE, and FAEQ.

This sequence belongs to the UDP-glycosyltransferase family. Expressed in roots, shoots and leaves.

The sequence is that of UDP-glycosyltransferase 85A5 (UGT85A5) from Arabidopsis thaliana (Mouse-ear cress).